Consider the following 2256-residue polypeptide: GON-4-like protein (2256 aa).

Disordered stretches follow at residues 1–56 (MLPC…DSAG), 105–213 (PSLE…SLGP), and 227–266 (LFIPTEEQDGEESDKRKKTKKGTKRKRDGRGQEQGTMTYD). Basic and acidic residues predominate over residues 23-35 (EDLHLEAAVKPDT). The span at 40-53 (DCTSESLSWGQSHD) shows a compositional bias: polar residues. Positions 141–176 (TREDGGDHTVPEEPPSGEHAEEVKAEGGELEMHSEG) are enriched in basic and acidic residues. A compositionally biased stretch (basic residues) spans 242–254 (RKKTKKGTKRKRD). S346 is subject to Phosphoserine. The segment covering 366–395 (EDDDSSDEEYQPDEEEEDETAEESLLESDV) has biased composition (acidic residues). Disordered stretches follow at residues 366-428 (EDDD…VLSE), 441-460 (SAEVVPMGPPPPPKPKQTRD), and 545-573 (DVENEDEADDDDDPEYNFLEDLDEPDTED). A compositionally biased stretch (acidic residues) spans 545–571 (DVENEDEADDDDDPEYNFLEDLDEPDT). Residues 609 to 1363 (EMGFSNMEDD…DCMEEISSDF (755 aa)) are required for interaction with YY1, SIN3A and HDAC1, and transcriptional repression activity. A Phosphoserine modification is found at S783. Composition is skewed to low complexity over residues 947–959 (TAGGSVTAATETS) and 1094–1115 (PWSESQSAPPSSSAPKLMLPSL). 4 disordered regions span residues 947-969 (TAGGSVTAATETSTDQHLQKTSP), 1078-1141 (AALP…SPCV), 1241-1288 (AEGK…EAVS), and 1360-1620 (SSDF…SRAR). A compositionally biased stretch (basic residues) spans 1119-1135 (KFRKPYVRRKPTRRKGA). Positions 1364 to 1386 (PKQDIGEEVKEECCMELDRDSPQ) are enriched in basic and acidic residues. Polar residues-rich tracts occupy residues 1387-1401 (EKASSVSEMSKQTAT) and 1429-1444 (LPQSTLSSMDQGTVLN). S1445 is subject to Phosphoserine. A compositionally biased stretch (acidic residues) spans 1475-1495 (GAEEEEEEDFDDLTQDEEDEL). The span at 1496 to 1510 (SSASEESVLSVPELQ) shows a compositional bias: low complexity. Acidic residues predominate over residues 1529–1553 (GESEEENSQEENSEPEEEEEEEAEG). The segment covering 1606-1620 (RSSHRARSRRGSRAR) has biased composition (basic residues). PAH domains are found at residues 1644-1716 (EQKD…LLPE) and 1726-1797 (EQQA…FDHL). Disordered regions lie at residues 1831–1886 (VEEE…LKKS) and 1909–1966 (LELV…APIP). The span at 1851-1868 (EIGVQHQDKESEWPEAAK) shows a compositional bias: basic and acidic residues. A phosphoserine mark is found at S1921 and S1994. Disordered regions lie at residues 2050 to 2078 (PETSETERLPGTVELPAPLPSPVSLSTRD) and 2110 to 2148 (IRGTSSGASASEAAPTASREGLAEDSETQGKGPEAVLPK). The segment covering 2111 to 2129 (RGTSSGASASEAAPTASRE) has biased composition (low complexity). In terms of domain architecture, Myb-like spans 2163–2216 (STGEKVVLWTREADRVILTMCQEQGAQPHTFSVISQQLGNKTPVEVSHRFRELM). Residues 2223 to 2256 (CEASSEDEDDATSTSNADQLSDHGDLLSEEELDE) form a disordered region.

In terms of assembly, found in a complex with YY1, SIN3A and HDAC1.

It localises to the nucleus. Has transcriptional repressor activity, probably as part of a complex with YY1, SIN3A and HDAC1. Required for B cell lymphopoiesis. The protein is GON-4-like protein (Gon4l) of Rattus norvegicus (Rat).